Here is a 253-residue protein sequence, read N- to C-terminus: Ribosome-inactivating protein saporin-9 (253 aa).

E176 is a catalytic residue.

The catalysed reaction is Endohydrolysis of the N-glycosidic bond at one specific adenosine on the 28S rRNA.. In terms of biological role, ribosome-inactivating protein of type 1, inhibits protein synthesis in animal cells. The polypeptide is Ribosome-inactivating protein saporin-9 (SAP9) (Saponaria officinalis (Common soapwort)).